Reading from the N-terminus, the 664-residue chain is DNA ligase (664 aa).

NAD(+)-binding positions include Asp32 to Asp36 and Ser80 to Leu81. Lys122 serves as the catalytic N6-AMP-lysine intermediate. NAD(+) is bound by residues Arg144, Glu178, and Lys314. Positions 407, 410, 423, and 429 each coordinate Zn(2+). In terms of domain architecture, BRCT spans Ile587–Gly664.

It belongs to the NAD-dependent DNA ligase family. LigA subfamily. Requires Mg(2+) as cofactor. Mn(2+) is required as a cofactor.

The catalysed reaction is NAD(+) + (deoxyribonucleotide)n-3'-hydroxyl + 5'-phospho-(deoxyribonucleotide)m = (deoxyribonucleotide)n+m + AMP + beta-nicotinamide D-nucleotide.. Its function is as follows. DNA ligase that catalyzes the formation of phosphodiester linkages between 5'-phosphoryl and 3'-hydroxyl groups in double-stranded DNA using NAD as a coenzyme and as the energy source for the reaction. It is essential for DNA replication and repair of damaged DNA. This Clostridium novyi (strain NT) protein is DNA ligase.